The sequence spans 213 residues: MDAEFWHSRWAENRIGFHLDDTNPVLTQYWPMVKATRDDRVLVPMCGKSVDLVWLAQKHNNVIGIELSDIAVRSFFAEHLYTPMVTSIGHESVYAFDEITIHCGDYFSVRIDPVDVVYDRAALIAMPKNMREMYVERLLSLVKKGGRILLVTLDYPQEQLNGPPFSVMSDEVRRLFDGCNITLLARDEKDETHPRRKNGLSHFAEETWLIEVA.

S-adenosyl-L-methionine-binding residues include tryptophan 10, methionine 45, glutamate 66, and arginine 120.

Belongs to the class I-like SAM-binding methyltransferase superfamily. TPMT family.

It localises to the cytoplasm. It carries out the reaction S-adenosyl-L-methionine + a thiopurine = S-adenosyl-L-homocysteine + a thiopurine S-methylether.. This chain is Thiopurine S-methyltransferase, found in Photobacterium profundum (strain SS9).